The primary structure comprises 67 residues: UPF0434 protein RALTA_A0561 (67 aa).

This sequence belongs to the UPF0434 family.

The chain is UPF0434 protein RALTA_A0561 from Cupriavidus taiwanensis (strain DSM 17343 / BCRC 17206 / CCUG 44338 / CIP 107171 / LMG 19424 / R1) (Ralstonia taiwanensis (strain LMG 19424)).